Here is a 357-residue protein sequence, read N- to C-terminus: 4-hydroxyphenylpyruvate dioxygenase (357 aa).

2 consecutive VOC domains span residues 17–137 (GFEF…LVDR) and 165–316 (YIDH…IFTD). Positions 168, 246, and 325 each coordinate Fe cation.

It belongs to the 4HPPD family. As to quaternary structure, homotetramer. Fe cation serves as cofactor.

The enzyme catalyses 3-(4-hydroxyphenyl)pyruvate + O2 = homogentisate + CO2. Its pathway is amino-acid degradation; L-phenylalanine degradation; acetoacetate and fumarate from L-phenylalanine: step 3/6. The polypeptide is 4-hydroxyphenylpyruvate dioxygenase (hpd) (Pseudomonas aeruginosa (strain ATCC 15692 / DSM 22644 / CIP 104116 / JCM 14847 / LMG 12228 / 1C / PRS 101 / PAO1)).